Reading from the N-terminus, the 336-residue chain is Cell division protein ZipA (336 aa).

Residues 1–2 (ME) lie on the Periplasmic side of the membrane. Residues 3–23 (LHILFFILAGLLIAVLIGFSL) traverse the membrane as a helical segment. The Cytoplasmic portion of the chain corresponds to 24–336 (WSARREKSRI…SRQAYLARVS (313 aa)).

It belongs to the ZipA family. As to quaternary structure, interacts with FtsZ via their C-terminal domains.

The protein localises to the cell inner membrane. Its function is as follows. Essential cell division protein that stabilizes the FtsZ protofilaments by cross-linking them and that serves as a cytoplasmic membrane anchor for the Z ring. Also required for the recruitment to the septal ring of downstream cell division proteins. The protein is Cell division protein ZipA of Actinobacillus pleuropneumoniae serotype 5b (strain L20).